Consider the following 1174-residue polypeptide: Probable DNA-directed RNA polymerase I subunit RPA2 (1174 aa).

A compositionally biased stretch (basic and acidic residues) spans 1 to 16 (MSFQTLERERTFKNPP). The interval 1-23 (MSFQTLERERTFKNPPKDGTSFP) is disordered. Residues 1089–1118 (CRDCGSIISIMSTISMNGVGSASEVRCRSC) form a C4-type zinc finger.

Belongs to the RNA polymerase beta chain family. As to quaternary structure, component of the RNA polymerase I (Pol I) complex consisting of 14 subunits.

Its subcellular location is the nucleus. The protein localises to the nucleolus. The catalysed reaction is RNA(n) + a ribonucleoside 5'-triphosphate = RNA(n+1) + diphosphate. DNA-dependent RNA polymerase catalyzes the transcription of DNA into RNA using the four ribonucleoside triphosphates as substrates. Second largest core component of RNA polymerase I which synthesizes ribosomal RNA precursors. Proposed to contribute to the polymerase catalytic activity and forms the polymerase active center together with the largest subunit. Pol I is composed of mobile elements and RPA2 is part of the core element with the central large cleft and probably a clamp element that moves to open and close the cleft. The sequence is that of Probable DNA-directed RNA polymerase I subunit RPA2 (rpa2) from Schizosaccharomyces pombe (strain 972 / ATCC 24843) (Fission yeast).